The sequence spans 159 residues: Ribosomal RNA large subunit methyltransferase H (159 aa).

S-adenosyl-L-methionine is bound by residues L76, G108, and F127–L132.

This sequence belongs to the RNA methyltransferase RlmH family. In terms of assembly, homodimer.

It is found in the cytoplasm. The catalysed reaction is pseudouridine(1915) in 23S rRNA + S-adenosyl-L-methionine = N(3)-methylpseudouridine(1915) in 23S rRNA + S-adenosyl-L-homocysteine + H(+). Functionally, specifically methylates the pseudouridine at position 1915 (m3Psi1915) in 23S rRNA. This chain is Ribosomal RNA large subunit methyltransferase H, found in Streptococcus sanguinis (strain SK36).